The primary structure comprises 222 residues: Phosphoribosylformylglycinamidine synthase subunit PurQ (222 aa).

A Glutamine amidotransferase type-1 domain is found at 2–222 (RTAVIQFPGS…FESLKGALVQ (221 aa)). Cysteine 87 (nucleophile) is an active-site residue. Catalysis depends on residues histidine 195 and glutamate 197.

As to quaternary structure, part of the FGAM synthase complex composed of 1 PurL, 1 PurQ and 2 PurS subunits.

It localises to the cytoplasm. The catalysed reaction is N(2)-formyl-N(1)-(5-phospho-beta-D-ribosyl)glycinamide + L-glutamine + ATP + H2O = 2-formamido-N(1)-(5-O-phospho-beta-D-ribosyl)acetamidine + L-glutamate + ADP + phosphate + H(+). It carries out the reaction L-glutamine + H2O = L-glutamate + NH4(+). It functions in the pathway purine metabolism; IMP biosynthesis via de novo pathway; 5-amino-1-(5-phospho-D-ribosyl)imidazole from N(2)-formyl-N(1)-(5-phospho-D-ribosyl)glycinamide: step 1/2. Its function is as follows. Part of the phosphoribosylformylglycinamidine synthase complex involved in the purines biosynthetic pathway. Catalyzes the ATP-dependent conversion of formylglycinamide ribonucleotide (FGAR) and glutamine to yield formylglycinamidine ribonucleotide (FGAM) and glutamate. The FGAM synthase complex is composed of three subunits. PurQ produces an ammonia molecule by converting glutamine to glutamate. PurL transfers the ammonia molecule to FGAR to form FGAM in an ATP-dependent manner. PurS interacts with PurQ and PurL and is thought to assist in the transfer of the ammonia molecule from PurQ to PurL. The chain is Phosphoribosylformylglycinamidine synthase subunit PurQ from Deinococcus geothermalis (strain DSM 11300 / CIP 105573 / AG-3a).